The chain runs to 187 residues: dCTP deaminase, dUMP-forming (187 aa).

DCTP contacts are provided by residues 99–104 (KSSIAR), Asp-117, 125–127 (TLE), Gln-146, Tyr-159, Lys-166, and Gln-170. The active-site Proton donor/acceptor is the Glu-127.

The protein belongs to the dCTP deaminase family. As to quaternary structure, homotrimer.

It carries out the reaction dCTP + 2 H2O = dUMP + NH4(+) + diphosphate. The protein operates within pyrimidine metabolism; dUMP biosynthesis; dUMP from dCTP: step 1/1. Functionally, bifunctional enzyme that catalyzes both the deamination of dCTP to dUTP and the hydrolysis of dUTP to dUMP without releasing the toxic dUTP intermediate. The chain is dCTP deaminase, dUMP-forming from Methanoculleus marisnigri (strain ATCC 35101 / DSM 1498 / JR1).